We begin with the raw amino-acid sequence, 346 residues long: Low-temperature-induced cysteine proteinase (346 aa).

Residues 1-17 (KLSKNKSDRYLPKVGDS) constitute a propeptide, activation peptide. Disulfide bonds link C39/C81, C73/C114, C172/C223, C256/C268, and C262/C283. C42 is a catalytic residue. Catalysis depends on residues H178 and N198. N-linked (GlcNAc...) asparagine glycosylation is present at N215. A propeptide spans 238-346 (NPPKPAPSPP…FGNGGKKSSS (109 aa)) (removed in mature form).

Belongs to the peptidase C1 family.

The sequence is that of Low-temperature-induced cysteine proteinase from Solanum lycopersicum (Tomato).